Consider the following 157-residue polypeptide: ATP synthase subunit b', chloroplastic (157 aa).

The helical transmembrane segment at 26–43 threads the bilayer; that stretch reads LMASQFLLIMLILDITFY.

Belongs to the ATPase B chain family. F-type ATPases have 2 components, F(1) - the catalytic core - and F(0) - the membrane proton channel. F(1) has five subunits: alpha(3), beta(3), gamma(1), delta(1), epsilon(1). F(0) has four main subunits: a(1), b(1), b'(1) and c(10-14). The alpha and beta chains form an alternating ring which encloses part of the gamma chain. F(1) is attached to F(0) by a central stalk formed by the gamma and epsilon chains, while a peripheral stalk is formed by the delta, b and b' chains.

Its subcellular location is the plastid. The protein resides in the chloroplast thylakoid membrane. Its function is as follows. F(1)F(0) ATP synthase produces ATP from ADP in the presence of a proton or sodium gradient. F-type ATPases consist of two structural domains, F(1) containing the extramembraneous catalytic core and F(0) containing the membrane proton channel, linked together by a central stalk and a peripheral stalk. During catalysis, ATP synthesis in the catalytic domain of F(1) is coupled via a rotary mechanism of the central stalk subunits to proton translocation. Component of the F(0) channel, it forms part of the peripheral stalk, linking F(1) to F(0). The b'-subunit is a diverged and duplicated form of b found in plants and photosynthetic bacteria. In Cyanidium caldarium (Red alga), this protein is ATP synthase subunit b', chloroplastic.